The primary structure comprises 462 residues: Spermatogenesis- and oogenesis-specific basic helix-loop-helix-containing protein 2 (462 aa).

Residues 200-251 enclose the bHLH domain; that stretch reads KASFLHSSKEKLRRERIKFCCEQLRTLLPYVKGRKSDVASVIEATVDYVKQV. The interval 422–462 is disordered; sequence PASSRTASSSIFRGFRESDSGHQASQQPTGPSLQPQDSSYF. Over residues 442 to 462 the composition is skewed to polar residues; sequence GHQASQQPTGPSLQPQDSSYF.

It is found in the nucleus. Its function is as follows. Probable transcription factor, which may be involved in spermatogenesis and oogenesis. The protein is Spermatogenesis- and oogenesis-specific basic helix-loop-helix-containing protein 2 (Sohlh2) of Rattus norvegicus (Rat).